The chain runs to 101 residues: Small ribosomal subunit protein uS14 (101 aa).

It belongs to the universal ribosomal protein uS14 family. As to quaternary structure, part of the 30S ribosomal subunit. Contacts proteins S3 and S10.

Functionally, binds 16S rRNA, required for the assembly of 30S particles and may also be responsible for determining the conformation of the 16S rRNA at the A site. The polypeptide is Small ribosomal subunit protein uS14 (Aeromonas hydrophila subsp. hydrophila (strain ATCC 7966 / DSM 30187 / BCRC 13018 / CCUG 14551 / JCM 1027 / KCTC 2358 / NCIMB 9240 / NCTC 8049)).